The following is a 729-amino-acid chain: Zorya protein ZorA (729 aa).

3 helical membrane passes run 20 to 40 (PATV…FYFF), 135 to 155 (LPGI…MIGL), and 177 to 197 (VLYA…ITWL).

The protein belongs to the MotA family.

The protein resides in the cell inner membrane. Its function is as follows. Component of antiviral defense system Zorya type I, composed of ZorA, ZorB, ZorC and ZorD. Expression of Zorya type I in E.coli (strain MG1655) confers 10,000-fold resistance to phage SECphi27, 100-fold resistance to lambda, and 10-fold resistance to T7. While most T7 infected Zorya-containing cells undergo abortive infection, a minority produce viable phage progeny. These eventually accumulate to a high multiplicity of infection, leading to culture collapse by 2 hours after initial infection. ZorA and ZorB probably assemble in the cell inner membrane and exert their effect there. In Escherichia coli O139:H28 (strain E24377A / ETEC), this protein is Zorya protein ZorA.